We begin with the raw amino-acid sequence, 465 residues long: Cerebellar degeneration-related protein 2-like (465 aa).

2 coiled-coil regions span residues 38-143 (LLER…EQLR) and 188-265 (LEQE…TYLL). Residues 282–314 (APEADDPQPGRGDDLGAQDGVSSPAASPGHVVR) are disordered. Residues S308, S318, and S344 each carry the phosphoserine modification. A coiled-coil region spans residues 350 to 377 (MSILREVDEQYHALLEKYEELLSKCRQH). The tract at residues 382 to 417 (RHAGVQTSRPISRDSSWRDLRGGEEGQGEVKAGEKS) is disordered. Residues 392–405 (ISRDSSWRDLRGGE) show a composition bias toward basic and acidic residues.

The protein belongs to the CDR2 family.

This is Cerebellar degeneration-related protein 2-like (CDR2L) from Homo sapiens (Human).